Here is a 380-residue protein sequence, read N- to C-terminus: Cytochrome b (380 aa).

The next 4 helical transmembrane spans lie at 33-53, 77-98, 113-133, and 178-198; these read FGSL…FLAM, WLIR…FLHV, WNMG…GYVL, and FFAF…VHLL. Residues histidine 83 and histidine 97 each contribute to the heme b site. Heme b is bound by residues histidine 182 and histidine 196. A ubiquinone is bound at residue histidine 201. Transmembrane regions (helical) follow at residues 226-246, 288-308, 320-340, and 347-367; these read IKDL…VLFF, LGGV…PLLH, ITQT…WIGG, and FIMI…IFMP.

Belongs to the cytochrome b family. As to quaternary structure, the cytochrome bc1 complex contains 11 subunits: 3 respiratory subunits (MT-CYB, CYC1 and UQCRFS1), 2 core proteins (UQCRC1 and UQCRC2) and 6 low-molecular weight proteins (UQCRH/QCR6, UQCRB/QCR7, UQCRQ/QCR8, UQCR10/QCR9, UQCR11/QCR10 and a cleavage product of UQCRFS1). This cytochrome bc1 complex then forms a dimer. Heme b is required as a cofactor.

It localises to the mitochondrion inner membrane. In terms of biological role, component of the ubiquinol-cytochrome c reductase complex (complex III or cytochrome b-c1 complex) that is part of the mitochondrial respiratory chain. The b-c1 complex mediates electron transfer from ubiquinol to cytochrome c. Contributes to the generation of a proton gradient across the mitochondrial membrane that is then used for ATP synthesis. In Synaptomys borealis (Northern bog lemming), this protein is Cytochrome b (MT-CYB).